Reading from the N-terminus, the 545-residue chain is Glucose-6-phosphate isomerase (545 aa).

E351 acts as the Proton donor in catalysis. Active-site residues include H382 and K510.

Belongs to the GPI family.

It localises to the cytoplasm. The catalysed reaction is alpha-D-glucose 6-phosphate = beta-D-fructose 6-phosphate. The protein operates within carbohydrate biosynthesis; gluconeogenesis. Its pathway is carbohydrate degradation; glycolysis; D-glyceraldehyde 3-phosphate and glycerone phosphate from D-glucose: step 2/4. Functionally, catalyzes the reversible isomerization of glucose-6-phosphate to fructose-6-phosphate. In Shewanella baltica (strain OS223), this protein is Glucose-6-phosphate isomerase.